The sequence spans 369 residues: Anhydro-N-acetylmuramic acid kinase (369 aa).

12–19 is a binding site for ATP; that stretch reads GTSLDGVD.

Belongs to the anhydro-N-acetylmuramic acid kinase family.

The catalysed reaction is 1,6-anhydro-N-acetyl-beta-muramate + ATP + H2O = N-acetyl-D-muramate 6-phosphate + ADP + H(+). Its pathway is amino-sugar metabolism; 1,6-anhydro-N-acetylmuramate degradation. The protein operates within cell wall biogenesis; peptidoglycan recycling. Functionally, catalyzes the specific phosphorylation of 1,6-anhydro-N-acetylmuramic acid (anhMurNAc) with the simultaneous cleavage of the 1,6-anhydro ring, generating MurNAc-6-P. Is required for the utilization of anhMurNAc either imported from the medium or derived from its own cell wall murein, and thus plays a role in cell wall recycling. This chain is Anhydro-N-acetylmuramic acid kinase, found in Escherichia coli O45:K1 (strain S88 / ExPEC).